The following is a 194-amino-acid chain: MNARIAEVQRKTKETEIKMVLNIDGDGEYKISTGIGFFDHMLQLFCHHGKFNIQVEAKGDLHIDDHHTIEDVGIVLGQAFLKAISDKRGIKRYSHIILPMDEALIMVAIDISGRPYLAFDVDFRLPKLGEMNSQMVVEFFRAFVSSAKVTLHVKKISGENDHHVCEAIFKAFGRVLKDACTIVDDKIPSSKGVL.

The protein belongs to the imidazoleglycerol-phosphate dehydratase family.

It localises to the cytoplasm. The enzyme catalyses D-erythro-1-(imidazol-4-yl)glycerol 3-phosphate = 3-(imidazol-4-yl)-2-oxopropyl phosphate + H2O. It participates in amino-acid biosynthesis; L-histidine biosynthesis; L-histidine from 5-phospho-alpha-D-ribose 1-diphosphate: step 6/9. This Caldicellulosiruptor saccharolyticus (strain ATCC 43494 / DSM 8903 / Tp8T 6331) protein is Imidazoleglycerol-phosphate dehydratase.